A 110-amino-acid polypeptide reads, in one-letter code: MVELKTIGLFLITAVAEIVGCYLPYLWLTQGRSVWLLLPAGLSLVLFAWLLSLHPTAAGRVYAAYGGVYIFVAILWLWLVDGIRPTLWDLVGSLVALFGMAIIMFAPRPA.

4 helical membrane-spanning segments follow: residues 7–27 (IGLF…PYLW), 33–53 (SVWL…LLSL), 63–83 (AAYG…VDGI), and 87–107 (LWDL…MFAP).

Belongs to the UPF0060 family.

The protein localises to the cell inner membrane. This chain is UPF0060 membrane protein ASA_2267, found in Aeromonas salmonicida (strain A449).